The following is a 288-amino-acid chain: ATP synthase gamma chain (288 aa).

Belongs to the ATPase gamma chain family. In terms of assembly, F-type ATPases have 2 components, CF(1) - the catalytic core - and CF(0) - the membrane proton channel. CF(1) has five subunits: alpha(3), beta(3), gamma(1), delta(1), epsilon(1). CF(0) has three main subunits: a, b and c.

Its subcellular location is the cell membrane. Functionally, produces ATP from ADP in the presence of a proton gradient across the membrane. The gamma chain is believed to be important in regulating ATPase activity and the flow of protons through the CF(0) complex. The sequence is that of ATP synthase gamma chain from Symbiobacterium thermophilum (strain DSM 24528 / JCM 14929 / IAM 14863 / T).